Consider the following 335-residue polypeptide: Protein-arginine kinase (335 aa).

A Phosphagen kinase C-terminal domain is found at 21-244 (VIISSRIRLA…NQIINEEKQI (224 aa)). ATP-binding positions include 24 to 28 (SSRIR), histidine 82, arginine 115, 166 to 170 (RASVM), and 197 to 202 (RGIYGE).

This sequence belongs to the ATP:guanido phosphotransferase family.

It catalyses the reaction L-arginyl-[protein] + ATP = N(omega)-phospho-L-arginyl-[protein] + ADP + H(+). In terms of biological role, catalyzes the specific phosphorylation of arginine residues in proteins. In Staphylococcus epidermidis (strain ATCC 12228 / FDA PCI 1200), this protein is Protein-arginine kinase.